Here is a 528-residue protein sequence, read N- to C-terminus: Cytochrome P450 monooxygenase polB (528 aa).

Residues 3–23 traverse the membrane as a helical segment; that stretch reads SFFLVCPVAFLGFTICYLVYV. Position 473 (C473) interacts with heme.

Belongs to the cytochrome P450 family. It depends on heme as a cofactor.

It is found in the membrane. It catalyses the reaction 4beta-carboxyl motiol + reduced [NADPH--hemoprotein reductase] + O2 = 2alpha-hydroxyl, 4beta-carboxyl motiol + oxidized [NADPH--hemoprotein reductase] + H2O + H(+). The enzyme catalyses 2-deoxypolytolypin + reduced [NADPH--hemoprotein reductase] + O2 = polytolypin + oxidized [NADPH--hemoprotein reductase] + H2O + H(+). It participates in secondary metabolite biosynthesis; terpenoid biosynthesis. Cytochrome P450 monooxygenase; part of the gene cluster that mediates the biosynthesis of antifungal fernane-type triterpenoid polytolypin. PolB acts as a hydroxylase and installs the 2-alpha-hydroxyl group in polytolypin. Within the pathway, the triterpene cyclase polA first catalyzes the cyclization of 2,3-oxidosqualene to motiol, polC converts the 4-alpha-methyl group of motiol to a carboxyl group, polB is responsible for appending a hydroxyl group at the 2-alpha position and polE is a dual functional P450, which can catalyze the formation of both the 1-beta-hydroxyl group and 10-beta-carboxyl group. The polypeptide is Cytochrome P450 monooxygenase polB (Polytolypa hystricis (strain UAMH7299)).